The chain runs to 1680 residues: Sodium channel protein type 7 subunit alpha (1680 aa).

Residues 1-117 (MLTSPEPKGL…RRAVIKVLVH (117 aa)) are Cytoplasmic-facing. An I repeat occupies 100 to 401 (TLSPLSSLRR…ILTMAYEQEK (302 aa)). Residues 118–137 (PLFRLLILISVLTDSILMCM) traverse the membrane as a helical segment. At 138 to 141 (SNLP) the chain is on the extracellular side. A helical transmembrane segment spans residues 142–167 (EWILAVENTLLGIYTFEILVKVIARG). The Cytoplasmic portion of the chain corresponds to 168 to 178 (IWAGSFSFLGD). The helical transmembrane segment at 179 to 196 (LWNWLDFSVTLFELITRS) threads the bilayer. The Extracellular segment spans residues 197–200 (SPLS). The helical transmembrane segment at 201–219 (SLPMFKTIRTLRILKIIPL) threads the bilayer. Over 220–237 (NHGLQSIVVTLVQCLKKL) the chain is Cytoplasmic. Residues 238–259 (LGAIALALFFLTVSSLFGMGLF) traverse the membrane as a helical segment. The Extracellular portion of the chain corresponds to 260 to 338 (MGNLKHKCVR…PDNGFTSFDN (79 aa)). Cys-267 and Cys-307 are oxidised to a cystine. Asn-281 and Asn-309 each carry an N-linked (GlcNAc...) asparagine glycan. The pore-forming intramembrane region spans 339–366 (FGWALLAMFRLMTQDYPELLYHQILYAS). Gly-367 is a topological domain (extracellular). The chain crosses the membrane as a helical span at residues 368 to 407 (KIYMIFFVLISFWFAFYMASLFLGILTMAYEQEKQRASEE). Residues 408–505 (SRDMDSKCHQ…EFADRIITHP (98 aa)) are Cytoplasmic-facing. Residues 487-756 (CSPCWIKLNE…QLAVAWIKMV (270 aa)) form an II repeat. A helical transmembrane segment spans residues 506–521 (LFDLFLVICIILNICF). The Extracellular portion of the chain corresponds to 522–530 (LALEHFPMS). A helical membrane pass occupies residues 531–559 (EELMSLLAIGNLVFIGIYTIEMILKIIAM). Residues 560 to 568 (HPYGYFQIS) lie on the Cytoplasmic side of the membrane. A helical membrane pass occupies residues 569 to 586 (WHIFDSILVVLGLTEMLL). Over 587–592 (ADIEEI) the chain is Extracellular. A helical membrane pass occupies residues 593 to 608 (TVFILVPLIFIKLGKY). Residues 609–625 (APPFKNLMRILGRALVA) lie on the Cytoplasmic side of the membrane. Residues 626 to 654 (LKDLVLLVSIFIYFSAVFGMKLFGRSYKD) form a helical membrane-spanning segment. The Extracellular portion of the chain corresponds to 655–672 (CVCHVDQDCQRQRWHMSD). Disulfide bonds link Cys-657–Cys-663 and Cys-695–Cys-704. An intramembrane region (pore-forming) is located at residues 673 to 699 (FLHAYVTVFRILCGEWIETLWECMEVA). A topological domain (extracellular) is located at residue Gly-700. Residues 701–731 (EAWCIPFYMMVILIGNLLILYLFVALVSSFA) traverse the membrane as a helical segment. Topologically, residues 732-933 (SYDATTEVSK…KTCCKIVENS (202 aa)) are cytoplasmic. Over residues 807 to 833 (DQSSGTEKTPVTESESQSLIASPSVSE) the composition is skewed to polar residues. The disordered stretch occupies residues 807–874 (DQSSGTEKTP…MKQSSSSECS (68 aa)). Ser-842 is subject to Phosphoserine. One copy of the III repeat lies at 915-1223 (NGKIWRNIRK…KKQYRALKKL (309 aa)). A helical transmembrane segment spans residues 934–952 (WFECFIGLVTLLCTGTLAL). At 953–960 (EDIYIDQR) the chain is on the extracellular side. Residues 961–989 (KTIKIFLEYGDMIFAYIFILEMLLKWVAY) form a helical membrane-spanning segment. The Cytoplasmic portion of the chain corresponds to 990–997 (GFKAYFSN). The chain crosses the membrane as a helical span at residues 998 to 1019 (NWYKLDFMVVIVLCLSLIGKTR). Residue Glu-1020 is a topological domain, extracellular. The chain crosses the membrane as a helical span at residues 1021-1039 (DLNPLASIKFLRALRVLSQ). At 1040–1054 (FERMKVVLRALIKTT) the chain is on the cytoplasmic side. The chain crosses the membrane as a helical span at residues 1055 to 1079 (LPAVSVFLVCLMIWLLFSVMGVFLF). Over 1080–1126 (AGKFYECIDPTRGERFSVFEVMNKSQCENLVFNESMPWENAKLNFDN) the chain is Extracellular. A disulfide bridge connects residues Cys-1086 and Cys-1106. Residues Asn-1102 and Asn-1112 are each glycosylated (N-linked (GlcNAc...) asparagine). Residues 1127–1153 (VGNGFLSLFQVATFNGWISIMNSAIDS) constitute an intramembrane region (pore-forming). At 1154–1166 (VGVYMQPSFEHSL) the chain is on the extracellular side. The chain crosses the membrane as a helical span at residues 1167-1201 (HMYTYFIIFVVFGLFLPLCMLIGVIIRNFNKQKIK). The Cytoplasmic segment spans residues 1202-1249 (QGGSNIFITVKQKKQYRALKKLLYADSQKPAARPRNKFQGFICDVVTH). An IV repeat occupies 1232 to 1530 (AARPRNKFQG…WNRFDPDRTQ (299 aa)). The helical transmembrane segment at 1250 to 1271 (RVFNVIIILLICFQATTIMIQN) threads the bilayer. The Extracellular segment spans residues 1272 to 1275 (DEQS). A helical transmembrane segment spans residues 1276–1304 (PQIETAVFWMNSLFTMLFTLECILKLTAF). Residues 1305–1311 (RCHYFTS) are Cytoplasmic-facing. A helical membrane pass occupies residues 1312 to 1337 (AWNVHDFMVVVFSITGLLLPLSIGQY). Over 1338-1340 (FVP) the chain is Extracellular. The chain crosses the membrane as a helical span at residues 1341-1361 (PSLVQLLLLSRIIHVLRPGKG). Residues 1362–1376 (PKVFHDLMLPLMLSL) lie on the Cytoplasmic side of the membrane. A helical membrane pass occupies residues 1377 to 1401 (PALLNIALLIFLVMFIYAIFGMYNF). Residues 1402 to 1419 (AYVKKEAGINDVSNFETF) lie on the Extracellular side of the membrane. Residues 1420–1443 (GSSMLCLFQVTTFSGWDGMLDAIF) constitute an intramembrane region (pore-forming). The Extracellular segment spans residues 1444–1467 (NSQWSDCDPDKINPGTQVRGDCGS). Cys-1450 and Cys-1465 form a disulfide bridge. Residues 1468–1503 (PSVGIFYFVSYILISWLIIVNMYVVLIMEFLSIPSK) traverse the membrane as a helical segment. Topologically, residues 1504–1680 (RKNRTLSEDD…EEKASIQTQI (177 aa)) are cytoplasmic. The interval 1646–1680 (KIQDIPEIDDGREDPNSKGVHSGQIEEKASIQTQI) is disordered.

The protein belongs to the sodium channel (TC 1.A.1.10) family. SCN7A subfamily. In terms of assembly, the sodium channel formed by SCN7A is probably a heterooligomeric complex consisting of the ion conducting pore forming alpha subunit SCN7A and regulatory beta subunits such as SCN3B. Interacts with ATP1A1; activates ATP1A1 and thereby indirectly signals to nearby neurons to regulate sodium homeostasis. Not tissue specific but widely expressed.

It is found in the cell membrane. The catalysed reaction is Na(+)(in) = Na(+)(out). Functionally, sodium leak channel functioning as an osmosensor regulating sodium ion levels in various tissues and organs. While most sodium channels are voltage-gated, SCN7A is not and lets sodium flow through membrane along its concentration gradient. In glial cells of the central nervous system, senses body-fluid sodium levels and controls salt intake behavior as well as voluntary water intake through activation of nearby neurons to maintain appropriate sodium levels in the body. By mediating sodium influx into keratinocytes, also plays a role in skin barrier homeostasis. This chain is Sodium channel protein type 7 subunit alpha, found in Rattus norvegicus (Rat).